Here is a 217-residue protein sequence, read N- to C-terminus: MQQFTVHKGLVAPMDRENVDTDAIIPKQFLKSIKKTGFGVNLFDEWRYLDHGEPGQDPASRKPNPDFVLNQPRYAGASILVARKNFGCGSSREHAPWALDQYGFRAILAPSFADIFFNNCFKNGLLPIVLPEATIDMLFNEIAAFPGYELTIDLDRQVIVRPQGEEIPFDVIAFRKFCLLNGFDDIGLTLRHADKIRAYEAERLATKPWLAHTLVQR.

It belongs to the LeuD family. LeuD type 1 subfamily. In terms of assembly, heterodimer of LeuC and LeuD.

The enzyme catalyses (2R,3S)-3-isopropylmalate = (2S)-2-isopropylmalate. It functions in the pathway amino-acid biosynthesis; L-leucine biosynthesis; L-leucine from 3-methyl-2-oxobutanoate: step 2/4. Catalyzes the isomerization between 2-isopropylmalate and 3-isopropylmalate, via the formation of 2-isopropylmaleate. This Delftia acidovorans (strain DSM 14801 / SPH-1) protein is 3-isopropylmalate dehydratase small subunit.